The primary structure comprises 550 residues: Putative pentatricopeptide repeat-containing protein At5g37570 (550 aa).

PPR repeat units follow at residues 73–107 (GTYL…GLAR), 109–143 (DEYT…GFDK), 144–174 (DVVV…MPER), 175–205 (NAVS…MPER), 206–240 (NLGS…DIIS), 241–267 (YTSM…ARGV), 268–302 (DVRA…NVKP), 303–333 (DEFI…LHQR), 339–369 (SHYV…MPQR), 370–404 (DLVS…GIVP), 405–435 (DEVA…MRKK), and 441–475 (SPDH…AHAS). Residues 476 to 550 (AWGSLLGGCS…KICGRSWISR (75 aa)) are type E motif.

The protein belongs to the PPR family. PCMP-E subfamily.

This Arabidopsis thaliana (Mouse-ear cress) protein is Putative pentatricopeptide repeat-containing protein At5g37570 (PCMP-E37).